Here is a 143-residue protein sequence, read N- to C-terminus: Type II secretion system core protein G (143 aa).

The propeptide at 1–17 (MIKRSITRSPSRAGQAG) is leader sequence. At Met-18 the chain carries N-methylmethionine. A helical membrane pass occupies residues 18–38 (MSLLEIIIVIVLIGAVLTLVG).

The protein belongs to the GSP G family. In terms of assembly, type II secretion system is composed of four main components: the outer membrane complex, the inner membrane complex, the cytoplasmic secretion ATPase and the periplasm-spanning pseudopilus. Forms homomultimers. Interacts with pseudopilin tip complex component XpsJ as well as XpsI and XcpH. Interacts with XpsN and secretin XpsD. Post-translationally, cleaved by the prepilin peptidase. In terms of processing, methylated by prepilin peptidase at the amino group of the N-terminal methionine once the leader sequence is cleaved.

The protein resides in the cell inner membrane. Core component of the type II secretion system required for the energy-dependent secretion of extracellular factors such as proteases and toxins from the periplasm. Pseudopilin (pilin-like) protein that polymerizes to form the pseudopilus. Further polymerization triggers pseudopilus growth. The polypeptide is Type II secretion system core protein G (xpsG) (Xanthomonas campestris pv. campestris (strain ATCC 33913 / DSM 3586 / NCPPB 528 / LMG 568 / P 25)).